The following is an 82-amino-acid chain: Large ribosomal subunit protein bL31B (82 aa).

The protein belongs to the bacterial ribosomal protein bL31 family. Type B subfamily. As to quaternary structure, part of the 50S ribosomal subunit.

The sequence is that of Large ribosomal subunit protein bL31B from Proteus mirabilis (strain HI4320).